We begin with the raw amino-acid sequence, 211 residues long: Proteasome subunit beta 2 (211 aa).

The propeptide at 1 to 17 is removed in mature form; by autocatalysis; the sequence is MVIMGNELQLENKILKG. Threonine 18 serves as the catalytic Nucleophile.

Belongs to the peptidase T1B family. In terms of assembly, the 20S proteasome core is composed of 14 alpha and 14 beta subunits that assemble into four stacked heptameric rings, resulting in a barrel-shaped structure. The two inner rings, each composed of seven catalytic beta subunits, are sandwiched by two outer rings, each composed of seven alpha subunits. The catalytic chamber with the active sites is on the inside of the barrel. Has a gated structure, the ends of the cylinder being occluded by the N-termini of the alpha-subunits. Is capped at one or both ends by the proteasome regulatory ATPase, PAN.

It localises to the cytoplasm. It carries out the reaction Cleavage of peptide bonds with very broad specificity.. Its activity is regulated as follows. The formation of the proteasomal ATPase PAN-20S proteasome complex, via the docking of the C-termini of PAN into the intersubunit pockets in the alpha-rings, triggers opening of the gate for substrate entry. Interconversion between the open-gate and close-gate conformations leads to a dynamic regulation of the 20S proteasome proteolysis activity. Component of the proteasome core, a large protease complex with broad specificity involved in protein degradation. This Saccharolobus solfataricus (strain 98/2) (Sulfolobus solfataricus) protein is Proteasome subunit beta 2.